The following is a 465-amino-acid chain: Cysteine--tRNA ligase (465 aa).

Residue cysteine 30 coordinates Zn(2+). Positions 32-42 (ITVYDYCHIGH) match the 'HIGH' region motif. The Zn(2+) site is built by cysteine 214, histidine 239, and glutamate 243. The 'KMSKS' region motif lies at 271-275 (KMSKS). Lysine 274 provides a ligand contact to ATP.

This sequence belongs to the class-I aminoacyl-tRNA synthetase family. In terms of assembly, monomer. Requires Zn(2+) as cofactor.

It is found in the cytoplasm. It carries out the reaction tRNA(Cys) + L-cysteine + ATP = L-cysteinyl-tRNA(Cys) + AMP + diphosphate. The polypeptide is Cysteine--tRNA ligase (Burkholderia mallei (strain NCTC 10229)).